A 633-amino-acid polypeptide reads, in one-letter code: Terminal nucleotidyltransferase 4B (633 aa).

The disordered stretch occupies residues 1-115; that stretch reads MFRSGERPLG…GGGRADGGGG (115 aa). Polar residues predominate over residues 25–34; it reads ETTNNNNNHH. Composition is skewed to low complexity over residues 36–52 and 60–70; these read PAAW…ASPV and RPAAALPASES. The segment covering 87-98 has biased composition (polar residues); it reads ASTYGLNYSLLQ. Residues 103-115 show a composition bias toward gly residues; sequence RAAGGGRADGGGG. Mg(2+) contacts are provided by aspartate 191 and aspartate 193. Residues glycine 254, lysine 279, serine 297, tyrosine 298, asparagine 382, and arginine 386 each contribute to the ATP site. Positions 322-382 constitute a PAP-associated domain; the sequence is NYGVLLIEFF…YIEDPLQPGN (61 aa). Positions 484–633 are disordered; that stretch reads LGKCRSNASE…RDAPLSELCR (150 aa). Residues 492 to 519 are compositionally biased toward low complexity; that stretch reads SEPLSKHSSNSSSGPVSSSSATQSSSSD. Lysine 531 participates in a covalent cross-link: Glycyl lysine isopeptide (Lys-Gly) (interchain with G-Cter in SUMO2). The segment covering 542–552 has biased composition (polar residues); that stretch reads RVGSQDVSLEV. Position 545 is a phosphoserine (serine 545). Residues lysine 558, lysine 573, and lysine 587 each participate in a glycyl lysine isopeptide (Lys-Gly) (interchain with G-Cter in SUMO2) cross-link. Positions 559–614 are enriched in polar residues; the sequence is MQSTQTTNTPNNANKSQHGSARLFRSSSKGFQGTAQTSHGALMTSKQHQGKSNTQY. Residues 618–624 carry the Basic, involved in binding of the RNA primer motif; it reads KKRRHKR.

It belongs to the DNA polymerase type-B-like family. In terms of assembly, component of a nucleolar TRAMP-like complex, an ATP-dependent exosome regulatory complex consisting of a helicase (MTREX), an oligadenylate polymerase (TENT4B or TENT4A), and a substrate specific RNA-binding factor (ZCCHC7 or ZCCHC8). Several TRAMP-like complexes exist with specific compositions and are associated with nuclear, or nucleolar RNA exosomes. It depends on Mg(2+) as a cofactor. The cofactor is Mn(2+).

The protein resides in the nucleus. It is found in the nucleolus. It localises to the cytoplasm. The catalysed reaction is RNA(n) + ATP = RNA(n)-3'-adenine ribonucleotide + diphosphate. Functionally, terminal nucleotidyltransferase that catalyzes preferentially the transfer of ATP and GTP on RNA 3' poly(A) tail creating a heterogeneous 3' poly(A) tail leading to mRNAs stabilization by protecting mRNAs from active deadenylation. Also functions as a catalytic subunit of a TRAMP-like complex which has a poly(A) RNA polymerase activity and is involved in a post-transcriptional quality control mechanism. Polyadenylation with short oligo(A) tails is required for the degradative activity of the exosome on several of its nuclear RNA substrates. Doesn't need a cofactor for polyadenylation activity (in vitro). Plays a role in replication-dependent histone mRNA degradation, probably through terminal uridylation of mature histone mRNAs. May play a role in sister chromatid cohesion. The sequence is that of Terminal nucleotidyltransferase 4B from Mus musculus (Mouse).